We begin with the raw amino-acid sequence, 628 residues long: Eukaryotic peptide chain release factor GTP-binding subunit ERF3B (628 aa).

The span at 1-10 shows a compositional bias: low complexity; the sequence is MDSGSSSSDS. Disordered regions lie at residues 1-49, 72-124, and 146-195; these read MDSG…SAFS, FLRG…LEGS, and LEES…VIVP. The tr-type G domain occupies 201-425; the sequence is KEHVNVVFIG…YLDNLPNFNR (225 aa). Positions 210-217 are G1; sequence GHVDAGKS. 213-218 lines the GTP pocket; sequence DAGKST. Positions 266 to 270 are G2; that stretch reads GKTVE. Residues 287-290 are G3; sequence DAPG. GTP contacts are provided by residues 349–352 and 391–393; these read NKMD and SGL. A G4 region spans residues 349 to 352; it reads NKMD. Residues 391 to 393 are G5; that stretch reads SGL.

It belongs to the TRAFAC class translation factor GTPase superfamily. Classic translation factor GTPase family. ERF3 subfamily. As to quaternary structure, component of the eRF1-eRF3-GTP ternary complex, composed of ETF1/ERF1 and ERF3 (GSPT1/ERF3A or GSPT2/ERF3B) and GTP. Component of the transient SURF (SMG1-UPF1-eRF1-eRF3) complex. Interacts with UPF1 and PABPC1. Highly expressed in IUCC stage II colorectal cancer (CRC).

Its subcellular location is the cytoplasm. It carries out the reaction GTP + H2O = GDP + phosphate + H(+). GTPase component of the eRF1-eRF3-GTP ternary complex, a ternary complex that mediates translation termination in response to the termination codons UAA, UAG and UGA. GSPT2/ERF3B mediates ETF1/ERF1 delivery to stop codons: The eRF1-eRF3-GTP complex binds to a stop codon in the ribosomal A-site. GTP hydrolysis by GSPT2/ERF3B induces a conformational change that leads to its dissociation, permitting ETF1/ERF1 to accommodate fully in the A-site. Component of the transient SURF complex which recruits UPF1 to stalled ribosomes in the context of nonsense-mediated decay (NMD) of mRNAs containing premature stop codons. The polypeptide is Eukaryotic peptide chain release factor GTP-binding subunit ERF3B (GSPT2) (Homo sapiens (Human)).